Here is a 595-residue protein sequence, read N- to C-terminus: Coronatine-insensitive protein homolog 1a (595 aa).

In terms of domain architecture, F-box spans 20 to 62 (WVPDEALHLVMGHVEDPRDREAASRVCRRWHRIDALTRKHVTV). The jasmonate site is built by arginine 90, arginine 351, tyrosine 389, arginine 412, and arginine 499.

As to quaternary structure, interacts with TIFY6A/JAZ3, TIFY6B/JAZ4 and TIFY11D/JAZ12 in a coronatine-dependent manner. Interacts with TIFY9/JAZ5, TIFY10A/JAZ6, TIFY10B/JAZ7, TIFY11A/JAZ9 and TIFY11C/JAZ11 in a coronatine-dependent manner.

Functionally, involved in jasmonate (JA) signaling. Required for jasmonate signaling in plant defense responses. Can complement Arabidopsis coi1-1 mutant and restore jasmonate signaling. Required for JA-regulated defense responses to infestation by the leaffolder Cnaphalocrocis medinalis. May act on an initial response of jasmonate-regulated gene expression toward drought tolerance as part of a BHLH148-TIFY11D/JAZ12-COI1A complex. Component of SCF(COI1) E3 ubiquitin ligase complexes, which may mediate the ubiquitination and subsequent proteasomal degradation of target proteins, including TIFY/JAZ family. The polypeptide is Coronatine-insensitive protein homolog 1a (Oryza sativa subsp. indica (Rice)).